We begin with the raw amino-acid sequence, 89 residues long: MALDSVRKQEIIGKFKQHEKDTGSPEVQIAILTDRINYLTGHLKTHKKDHHSRRGLLKMVGQRRNLLAYLKRTDIERYRKLVTELGLRH.

The protein belongs to the universal ribosomal protein uS15 family. In terms of assembly, part of the 30S ribosomal subunit. Forms a bridge to the 50S subunit in the 70S ribosome, contacting the 23S rRNA.

Functionally, one of the primary rRNA binding proteins, it binds directly to 16S rRNA where it helps nucleate assembly of the platform of the 30S subunit by binding and bridging several RNA helices of the 16S rRNA. In terms of biological role, forms an intersubunit bridge (bridge B4) with the 23S rRNA of the 50S subunit in the ribosome. In Heliobacterium modesticaldum (strain ATCC 51547 / Ice1), this protein is Small ribosomal subunit protein uS15.